The primary structure comprises 668 residues: Protein brown (668 aa).

Topologically, residues 1–412 (MPMDEGDAQG…TEDLANIRSG (412 aa)) are cytoplasmic. The ABC transporter domain occupies 31 to 328 (YSFWNECRKQ…FTEGFMQPKN (298 aa)). 63-70 (GGSGAGKT) provides a ligand contact to ATP. The helical transmembrane segment at 413–433 (LIGFGFFMTTAVTLSLMYSGV) threads the bilayer. Residues 434–453 (GGLTQRTVQDVGGSIFMLSN) are Extracellular-facing. The helical transmembrane segment at 454 to 474 (EMIFTFSYGVTYIFPAALPII) threads the bilayer. At 475–490 (RREVAEGTYSLSAYYV) the chain is on the cytoplasmic side. A helical transmembrane segment spans residues 491 to 511 (ALVLSFVPVAFFKGYMFLSVI). Residues 512–524 (YASIYYTRGFLLY) are Extracellular-facing. Residues 525-545 (ITMGFLMSLSAIAAVGYGVFL) form a helical membrane-spanning segment. The Cytoplasmic portion of the chain corresponds to 546–561 (SSLFETDKMASECAAP). A helical transmembrane segment spans residues 562–582 (FDLIFLIFGGTYMNVDSVPLL). Residues 583–637 (KYFSLFFYSNEALMYNFWIDIDNIACXVNDEHPCCQTGLEVLQQASFRTADYTFW) are Extracellular-facing. The chain crosses the membrane as a helical span at residues 638-658 (LDCASLLVVALVFHIVSFTLI). Over 659–668 (RRYINRSGYY) the chain is Cytoplasmic.

The protein belongs to the ABC transporter superfamily. ABCG family. Eye pigment precursor importer (TC 3.A.1.204) subfamily. May form a heterodimer with w/white. As to expression, expressed in eyes.

The protein localises to the membrane. The catalysed reaction is guanine(out) + ATP + H2O = guanine(in) + ADP + phosphate + H(+). The enzyme catalyses riboflavin(in) + ATP + H2O = riboflavin(out) + ADP + phosphate + H(+). It carries out the reaction (6S)-5,6,7,8-tetrahydrofolate(out) + ATP + H2O = (6S)-5,6,7,8-tetrahydrofolate(in) + ADP + phosphate + H(+). Its function is as follows. ATP-dependent transporter of the ATP-binding cassette (ABC) family which transports various molecules including bioamines, neurotransmitters and metabolic intermediates. In the eye and probably in association with w/white, required for the transport of the eye red pigment precursor, guanine, into pigment cell granules. In Malpighian tubules, involved in guanine uptake. Probably in association with w/white, involved in aging-induced intestinal stem cell proliferation in the midgut by regulating tetrahydrofolate transport. The protein is Protein brown of Drosophila virilis (Fruit fly).